The sequence spans 417 residues: NADH-quinone oxidoreductase subunit D (417 aa).

This sequence belongs to the complex I 49 kDa subunit family. As to quaternary structure, NDH-1 is composed of 14 different subunits. Subunits NuoB, C, D, E, F, and G constitute the peripheral sector of the complex.

The protein localises to the cell inner membrane. The enzyme catalyses a quinone + NADH + 5 H(+)(in) = a quinol + NAD(+) + 4 H(+)(out). NDH-1 shuttles electrons from NADH, via FMN and iron-sulfur (Fe-S) centers, to quinones in the respiratory chain. The immediate electron acceptor for the enzyme in this species is believed to be ubiquinone. Couples the redox reaction to proton translocation (for every two electrons transferred, four hydrogen ions are translocated across the cytoplasmic membrane), and thus conserves the redox energy in a proton gradient. This chain is NADH-quinone oxidoreductase subunit D, found in Nitrosomonas europaea (strain ATCC 19718 / CIP 103999 / KCTC 2705 / NBRC 14298).